The sequence spans 74 residues: uncharacterized protein (74 aa).

This is an uncharacterized protein from Sinorhizobium fredii (strain NBRC 101917 / NGR234).